Reading from the N-terminus, the 150-residue chain is MIPKVIDLAAPVAAQFNLEVVGAVFQTNQSPPVLRVDIRNCDADTGLEDCEKMSRALEAVLDEDDVFPEAYVLEISSPGLSTLLTCDRDFVSFRGFPVLVQTHQPYRGHHQWIGNLTGRDEKFVQLNQKGRPIKIPREEILQVQLHDSPE.

It belongs to the RimP family.

It localises to the cytoplasm. In terms of biological role, required for maturation of 30S ribosomal subunits. The protein is Ribosome maturation factor RimP of Acaryochloris marina (strain MBIC 11017).